A 756-amino-acid chain; its full sequence is Probable chemoreceptor y4sI (756 aa).

2 helical membrane-spanning segments follow: residues 26–46 (VCVA…TSVA) and 330–350 (LIKI…MAIL). HAMP domains lie at 353–406 (RSIS…ARVA) and 434–486 (DEQA…ETIR). The 230-residue stretch at 491 to 720 (QAASMSSIVS…ESDAACRSLN (230 aa)) folds into the Methyl-accepting transducer domain. Positions 736–756 (GGGSSTRQPQSPPTQRYFMSR) are disordered.

Belongs to the methyl-accepting chemotaxis (MCP) protein family.

Its subcellular location is the cell membrane. Chemotactic-signal transducers respond to changes in the concentration of attractants and repellents in the environment, transduce a signal from the outside to the inside of the cell, and facilitate sensory adaptation through the variation of the level of methylation. Attractants increase the level of methylation while repellents decrease the level of methylation. This chain is Probable chemoreceptor y4sI, found in Sinorhizobium fredii (strain NBRC 101917 / NGR234).